Here is a 226-residue protein sequence, read N- to C-terminus: Cytidylate kinase (226 aa).

11 to 19 lines the ATP pocket; the sequence is GPASAGKST.

Belongs to the cytidylate kinase family. Type 1 subfamily.

The protein resides in the cytoplasm. The enzyme catalyses CMP + ATP = CDP + ADP. It catalyses the reaction dCMP + ATP = dCDP + ADP. In Pediococcus pentosaceus (strain ATCC 25745 / CCUG 21536 / LMG 10740 / 183-1w), this protein is Cytidylate kinase.